The following is a 270-amino-acid chain: MPSSFDLLGEMIGLLQTEQLTSSLACPLPNALTKRQDLWRALINQRPALPLSKDYLNLEDAYLDDWRASFVPVSVKDCQKTNYTSLFLYHGDIRYLAVDAIVNAANSELLGCFIPNHGCIDNAIHTFAGSRLRLACQAIMTEQGRKEAIGQAKLTSAYHLPASYIIHTVGPRITKGRHVSPIRADLLARCYRSSLDLAVKAGLTSLAFCSISTGEFGFPKKEAAQIAIKTVLKWQAEHPESKTLTIIFNTFTSEDKALYDTYLQKENNCE.

The region spanning 73-267 (VSVKDCQKTN…LYDTYLQKEN (195 aa)) is the Macro domain. D92, I93, and N106 together coordinate ADP-D-ribose. 3 residues coordinate Zn(2+): C112, H117, and C119. ADP-D-ribose contacts are provided by C119, I120, D121, S212, T213, G214, E215, and F216.

Belongs to the MacroD-type family. Zn-Macro subfamily. Requires Zn(2+) as cofactor.

The catalysed reaction is 4-O-(ADP-D-ribosyl)-L-aspartyl-[protein] + H2O = L-aspartyl-[protein] + ADP-D-ribose + H(+). In terms of biological role, ADP-ribosylhydrolase that specifically reverses the SirTM-mediated mono-ADP-ribosylation at an asparatate residue of GcvH-L, by releasing ADP-ribose from the target protein. May play a role in the regulation of the response to host-induced oxidative stress. The protein is Protein-ADP-ribose hydrolase of Streptococcus pyogenes serotype M18 (strain MGAS8232).